The primary structure comprises 436 residues: Methylenetetrahydrofolate--tRNA-(uracil-5-)-methyltransferase TrmFO (436 aa).

Residue 9 to 14 (GAGLAG) coordinates FAD.

Belongs to the MnmG family. TrmFO subfamily. FAD serves as cofactor.

Its subcellular location is the cytoplasm. The catalysed reaction is uridine(54) in tRNA + (6R)-5,10-methylene-5,6,7,8-tetrahydrofolate + NADH + H(+) = 5-methyluridine(54) in tRNA + (6S)-5,6,7,8-tetrahydrofolate + NAD(+). It carries out the reaction uridine(54) in tRNA + (6R)-5,10-methylene-5,6,7,8-tetrahydrofolate + NADPH + H(+) = 5-methyluridine(54) in tRNA + (6S)-5,6,7,8-tetrahydrofolate + NADP(+). In terms of biological role, catalyzes the folate-dependent formation of 5-methyl-uridine at position 54 (M-5-U54) in all tRNAs. The sequence is that of Methylenetetrahydrofolate--tRNA-(uracil-5-)-methyltransferase TrmFO from Acetivibrio thermocellus (strain ATCC 27405 / DSM 1237 / JCM 9322 / NBRC 103400 / NCIMB 10682 / NRRL B-4536 / VPI 7372) (Clostridium thermocellum).